Reading from the N-terminus, the 90-residue chain is MNIKPLADRVLILPAPAEEKTIGGIIIPDTAKEKPLKGEVVAVGHGTKDEEMVLKVGDTVLYGKYAGTELEVEGTKYLIMRQSDVLAILG.

This sequence belongs to the GroES chaperonin family. As to quaternary structure, heptamer of 7 subunits arranged in a ring. Interacts with the chaperonin GroEL.

It is found in the cytoplasm. Together with the chaperonin GroEL, plays an essential role in assisting protein folding. The GroEL-GroES system forms a nano-cage that allows encapsulation of the non-native substrate proteins and provides a physical environment optimized to promote and accelerate protein folding. GroES binds to the apical surface of the GroEL ring, thereby capping the opening of the GroEL channel. The protein is Co-chaperonin GroES of Bacteroides thetaiotaomicron (strain ATCC 29148 / DSM 2079 / JCM 5827 / CCUG 10774 / NCTC 10582 / VPI-5482 / E50).